The following is a 165-amino-acid chain: SsrA-binding protein (165 aa).

The protein belongs to the SmpB family.

Its subcellular location is the cytoplasm. Required for rescue of stalled ribosomes mediated by trans-translation. Binds to transfer-messenger RNA (tmRNA), required for stable association of tmRNA with ribosomes. tmRNA and SmpB together mimic tRNA shape, replacing the anticodon stem-loop with SmpB. tmRNA is encoded by the ssrA gene; the 2 termini fold to resemble tRNA(Ala) and it encodes a 'tag peptide', a short internal open reading frame. During trans-translation Ala-aminoacylated tmRNA acts like a tRNA, entering the A-site of stalled ribosomes, displacing the stalled mRNA. The ribosome then switches to translate the ORF on the tmRNA; the nascent peptide is terminated with the 'tag peptide' encoded by the tmRNA and targeted for degradation. The ribosome is freed to recommence translation, which seems to be the essential function of trans-translation. The protein is SsrA-binding protein of Ruthia magnifica subsp. Calyptogena magnifica.